Reading from the N-terminus, the 1358-residue chain is DNA-directed RNA polymerase subunit beta (1358 aa).

Belongs to the RNA polymerase beta chain family. In terms of assembly, the RNAP catalytic core consists of 2 alpha, 1 beta, 1 beta' and 1 omega subunit. When a sigma factor is associated with the core the holoenzyme is formed, which can initiate transcription.

It carries out the reaction RNA(n) + a ribonucleoside 5'-triphosphate = RNA(n+1) + diphosphate. DNA-dependent RNA polymerase catalyzes the transcription of DNA into RNA using the four ribonucleoside triphosphates as substrates. This is DNA-directed RNA polymerase subunit beta from Francisella tularensis subsp. novicida (strain U112).